We begin with the raw amino-acid sequence, 357 residues long: DNA replication and repair protein RecF (357 aa).

An ATP-binding site is contributed by 30–37; that stretch reads GANGSGKT.

Belongs to the RecF family.

It localises to the cytoplasm. Its function is as follows. The RecF protein is involved in DNA metabolism; it is required for DNA replication and normal SOS inducibility. RecF binds preferentially to single-stranded, linear DNA. It also seems to bind ATP. This chain is DNA replication and repair protein RecF, found in Salmonella agona (strain SL483).